We begin with the raw amino-acid sequence, 426 residues long: Glutamate-1-semialdehyde 2,1-aminomutase (426 aa).

K265 bears the N6-(pyridoxal phosphate)lysine mark.

The protein belongs to the class-III pyridoxal-phosphate-dependent aminotransferase family. HemL subfamily. As to quaternary structure, homodimer. Pyridoxal 5'-phosphate serves as cofactor.

Its subcellular location is the cytoplasm. It catalyses the reaction (S)-4-amino-5-oxopentanoate = 5-aminolevulinate. Its pathway is porphyrin-containing compound metabolism; protoporphyrin-IX biosynthesis; 5-aminolevulinate from L-glutamyl-tRNA(Glu): step 2/2. The sequence is that of Glutamate-1-semialdehyde 2,1-aminomutase from Klebsiella pneumoniae (strain 342).